Here is a 383-residue protein sequence, read N- to C-terminus: GTP-binding protein 10 (383 aa).

Residues 13–148 form the Obg domain; it reads GNFIDNLRIY…RIIHLDLKLI (136 aa). The OBG-type G domain occupies 149 to 344; the sequence is SDVGLVGFPN…LIGCIRKTMD (196 aa). GTP contacts are provided by residues 155 to 162, 202 to 206, and 278 to 281; these read GFPNAGKS, DLPGL, and NKMD. The segment at 362 to 383 is disordered; sequence LQKETSRTVKRNLKNSPQRTHH. Over residues 369–383 the composition is skewed to basic residues; that stretch reads TVKRNLKNSPQRTHH.

The protein belongs to the TRAFAC class OBG-HflX-like GTPase superfamily. OBG GTPase family.

Its subcellular location is the nucleus. The protein resides in the nucleolus. Functionally, may be involved in the ribosome maturation process. In Xenopus tropicalis (Western clawed frog), this protein is GTP-binding protein 10 (gtpbp10).